The following is a 357-amino-acid chain: DNA integrity scanning protein DisA (357 aa).

A DAC domain is found at Pro8–Asp148. Gly76, Leu94, Thr107, Thr111, and Arg128 together coordinate 3',3'-c-di-AMP.

Belongs to the DisA family. Homooctamer. The cofactor is Mg(2+).

It carries out the reaction 2 ATP = 3',3'-c-di-AMP + 2 diphosphate. Its activity is regulated as follows. Inhibited by 3'-dATP. Its function is as follows. Participates in a DNA-damage check-point. DisA forms globular foci that rapidly scan along the chromosomes searching for lesions. In terms of biological role, has diadenylate cyclase activity, catalyzing the condensation of 2 ATP molecules into cyclic di-AMP (c-di-AMP). c-di-AMP likely acts as a signaling molecule that may couple DNA integrity with a cellular process. This rate-limiting step is the accessibility of the active site; mutating the possible exit tunnel (residues 128-130) increases product 2-fold despite Arg-130 being important for ATP-binding. Does not convert GTP to c-di-GMP. This chain is DNA integrity scanning protein DisA, found in Thermotoga maritima (strain ATCC 43589 / DSM 3109 / JCM 10099 / NBRC 100826 / MSB8).